Reading from the N-terminus, the 277-residue chain is Large ribosomal subunit protein uL2 (277 aa).

Residues 222–277 (GVAMNPIDHPHGGGEGRTSGGRHPVTPWGKPTKGKKTRTNKSTDKFILLSRHKRKK) form a disordered region.

The protein belongs to the universal ribosomal protein uL2 family. Part of the 50S ribosomal subunit. Forms a bridge to the 30S subunit in the 70S ribosome.

Its function is as follows. One of the primary rRNA binding proteins. Required for association of the 30S and 50S subunits to form the 70S ribosome, for tRNA binding and peptide bond formation. It has been suggested to have peptidyltransferase activity; this is somewhat controversial. Makes several contacts with the 16S rRNA in the 70S ribosome. This Bradyrhizobium sp. (strain ORS 278) protein is Large ribosomal subunit protein uL2.